We begin with the raw amino-acid sequence, 371 residues long: Neuropeptide S receptor (371 aa).

Residues 1–52 (MPANLTEGSFHANQTVPMLDSSPVACTEIVTFTEALVAEEWGSFYSSFKTEQ) lie on the Extracellular side of the membrane. N-linked (GlcNAc...) asparagine glycosylation is found at asparagine 4 and asparagine 13. Residues 53 to 73 (LITLWVLFVVTIVGNSVVLFS) form a helical membrane-spanning segment. At 74-82 (TCRRKRKSR) the chain is on the cytoplasmic side. The helical transmembrane segment at 83–103 (MTFFVTQLAITDSFTGLINIL) threads the bilayer. Topologically, residues 104 to 123 (TDIIWRFTGDFMAPDLVCRV) are extracellular. Cysteine 121 and cysteine 197 are disulfide-bonded. The helical transmembrane segment at 124-144 (VRYLQVVLLYASTYVLVSLSI) threads the bilayer. At 145–164 (DRYHAIVYPMKFLQGEKQAK) the chain is on the cytoplasmic side. The helical transmembrane segment at 165–185 (VLIGIAWSLSFLFSIPTLIIF) threads the bilayer. Over 186–212 (GKRTLSNGEVQCWALWPDDSYWTPYMT) the chain is Extracellular. A helical transmembrane segment spans residues 213–233 (IVAFLVYFIPLAIISVIYGLV). The Cytoplasmic portion of the chain corresponds to 234 to 275 (IRTIWMKSKTHETVISNCSDGKLCCSYNRGLISKAKIKAIKY). Residues 276-296 (SIVIILAFICCWSPYFLFDIL) traverse the membrane as a helical segment. At 297 to 312 (DNFNVLPDTKERFYAS) the chain is on the extracellular side. Residues 313 to 333 (VIIQNLPALNSAINPLIYCIF) form a helical membrane-spanning segment. Over 334 to 371 (SSSICSPCKMQRSQDSRMTYRERSERHEMQILSKPEFI) the chain is Cytoplasmic.

It belongs to the G-protein coupled receptor 1 family. Vasopressin/oxytocin receptor subfamily.

Its subcellular location is the cell membrane. Functionally, G-protein coupled receptor for neuropeptide S (NPS). Promotes mobilization of intracellular Ca(2+) stores. Inhibits cell growth in response to NPS binding. Involved in pathogenesis of asthma and other IgE-mediated diseases. This is Neuropeptide S receptor (Npsr1) from Mus musculus (Mouse).